A 1263-amino-acid polypeptide reads, in one-letter code: Valine--tRNA ligase (1263 aa).

Ser-2 carries the N-acetylserine modification. The GST C-terminal domain maps to 89-219; it reads GSRAAVLVQQ…YSGARSVTQQ (131 aa). The tract at residues 218 to 294 is disordered; sequence QQPGSEVIAP…PGEKKDVSGA (77 aa). 2 stretches are compositionally biased toward basic and acidic residues: residues 234 to 248 and 259 to 274; these read LKKEAKKREKLEKFQ and HGEKKPKPEKKEKRDP. Residues 343–353 carry the 'HIGH' region motif; that stretch reads PNVTGSLHLGH. Phosphoserine is present on residues Ser-436 and Ser-526. An N6-acetyllysine modification is found at Lys-644. A 'KMSKS' region motif is present at residues 861–865; sequence KMSKS. Lys-864 is an ATP binding site.

The protein belongs to the class-I aminoacyl-tRNA synthetase family. In terms of assembly, forms high-molecular-mass aggregates with elongation factor 1.

The catalysed reaction is tRNA(Val) + L-valine + ATP = L-valyl-tRNA(Val) + AMP + diphosphate. Can be regulated by protein kinase C-dependent phosphorylation. This is Valine--tRNA ligase (Vars1) from Mus musculus (Mouse).